Consider the following 151-residue polypeptide: Large ribosomal subunit protein uL13 (151 aa).

The segment at 129-151 (SNHPHQAQKPETLTINTIPGGNN) is disordered.

Belongs to the universal ribosomal protein uL13 family. In terms of assembly, part of the 50S ribosomal subunit.

Functionally, this protein is one of the early assembly proteins of the 50S ribosomal subunit, although it is not seen to bind rRNA by itself. It is important during the early stages of 50S assembly. This is Large ribosomal subunit protein uL13 from Gloeothece citriformis (strain PCC 7424) (Cyanothece sp. (strain PCC 7424)).